We begin with the raw amino-acid sequence, 476 residues long: MSGSSARSSHLSQPVVKSVLVYRNGDPFYAGRRVVIHEKKVSSFEVFLKEVTGGVQAPFGAVRNIYTPRTGHRIRKLDQIQSGGNYVAGGQEAFKKLNYLDIGEIKKRPMEVVNTEVKPVIHSRINVSARFRKPLQEPCTIFLIANGDLINPASRLLIPRKTLNQWDHVLQMVTEKITLRSGAVHRLYTLEGKLVESGAELENGQFYVAVGRDKFKKLPYSELLFDKSTMRRPFGQKASSLPPIVGSRKSKGSGNDRHSKSTVGSSDNSSPQPLKRKGKKEDVNSEKLTKLKQNVKLKNSQETIPNSDEGIFKAGAERSETRGAAEVQEDEDTQVEVPVDQRPAEIVDEEEDGEKANKDAEQKEDFSGMNGDLEEEGGREATDAPEQVEEILDHSEQQARPARVNGGTDEENGEELQQVNNELQLVLDKERKSQGAGSGQDEADVDPQRPPRPEVKITSPEENENNQQNKDYAAVA.

Doublecortin domains lie at 17-100 (KSVL…LNYL) and 139-221 (CTIF…LPYS). The disordered stretch occupies residues 234–476 (FGQKASSLPP…QQNKDYAAVA (243 aa)). A compositionally biased stretch (polar residues) spans 261–272 (STVGSSDNSSPQ). Position 270 is a phosphoserine (Ser270). Over residues 279–289 (KKEDVNSEKLT) the composition is skewed to basic and acidic residues. The segment covering 296–306 (KLKNSQETIPN) has biased composition (polar residues). Residues 354 to 366 (EKANKDAEQKEDF) show a composition bias toward basic and acidic residues. Residues 415–426 (ELQQVNNELQLV) are compositionally biased toward low complexity. A compositionally biased stretch (basic and acidic residues) spans 446–455 (DPQRPPRPEV).

In terms of assembly, interacts with DVL1, DVL2 and DVL3. As to expression, ubiquitously expressed. In brain, highly expressed in the entorhinal cortex, inferior temporal cortex, medial temporal cortex, hypothalamus, amygdala and hippocampus. Expressed in liver by cholangiocytes, the epithelial cells of the bile ducts (at protein level).

The protein resides in the cell projection. The protein localises to the cilium. Its subcellular location is the cytoplasm. It localises to the cytoskeleton. It is found in the cilium axoneme. The protein resides in the kinocilium. Protein that plays a role in the inhibition of canonical Wnt signaling pathway. May be involved in neuronal migration during development of the cerebral neocortex. Involved in the control of ciliogenesis and ciliary length. In Homo sapiens (Human), this protein is Doublecortin domain-containing protein 2 (DCDC2).